Here is a 532-residue protein sequence, read N- to C-terminus: [Pyruvate dehydrogenase [acetyl-transferring]]-phosphatase 2, mitochondrial (532 aa).

A mitochondrion-targeting transit peptide spans 1 to 69 (MSSTVSYWIF…FALRKAYRHT (69 aa)). The PPM-type phosphatase domain occupies 107–518 (NSVLRFESNQ…YRDDITVMVV (412 aa)). Mn(2+) is bound by residues aspartate 144, glycine 145, aspartate 415, and aspartate 511.

Belongs to the PP2C family. Mg(2+) is required as a cofactor.

Its subcellular location is the mitochondrion. It carries out the reaction O-phospho-L-seryl-[pyruvate dehydrogenase E1 alpha subunit] + H2O = L-seryl-[pyruvate dehydrogenase E1 alpha subunit] + phosphate. In terms of biological role, mitochondrial enzyme that catalyzes the dephosphorylation and concomitant reactivation of the alpha subunit of the E1 component of the pyruvate dehydrogenase complex (PDC), thereby stimulating the conversion of pyruvate into acetyl-CoA. Acts as a crucial regulator of T cell metabolism and function, with a particular focus on T-helper Th17. The chain is [Pyruvate dehydrogenase [acetyl-transferring]]-phosphatase 2, mitochondrial (Pdp2) from Mus musculus (Mouse).